Reading from the N-terminus, the 204-residue chain is Ras-related protein Rab-7L1 (204 aa).

Ser33, Lys34, His35, Tyr36, Lys37, and Thr39 together coordinate GTP. The Effector region signature appears at 36 to 44 (YKSTVGVDF). The residue at position 71 (Thr71) is a Phosphothreonine; by LRRK2. Ser72 carries the post-translational modification Phosphoserine. Residues Lys126, Val156, and Lys157 each contribute to the GTP site. Residues Cys203 and Cys204 are each lipidated (S-geranylgeranyl cysteine).

This sequence belongs to the small GTPase superfamily. Rab family. In terms of assembly, interacts with LRRK2 (via the N-terminus); this interaction is direct and stimulates kinase activity. In terms of tissue distribution, expressed predominantly in kidney and much less in brain, heart, muscle, fat, liver, spleen, adrenal gland, ovary, thymus and lung. Not expressed in testis and intestine.

It localises to the cell membrane. The protein localises to the cytoplasm. The protein resides in the perinuclear region. It is found in the golgi apparatus. Its subcellular location is the golgi apparatus membrane. It localises to the trans-Golgi network. The protein localises to the cytoskeleton. In terms of biological role, the small GTPases Rab are key regulators in vesicle trafficking. Essential for maintaining the integrity of endosome-trans-Golgi network structure. Together with LRRK2, plays a role in the retrograde trafficking pathway for recycling proteins, such as mannose 6 phosphate receptor (M6PR), between lysosomes and the Golgi apparatus in a retromer-dependent manner. Recruits LRRK2 to the Golgi apparatus and stimulates LRRK2 kinase activity. Stimulates phosphorylation of RAB10 'Thr-73' by LRRK2. Regulates also neuronal process morphology in the intact central nervous system (CNS). The polypeptide is Ras-related protein Rab-7L1 (Rab29) (Rattus norvegicus (Rat)).